The sequence spans 201 residues: Recombination protein RecR (201 aa).

A C4-type zinc finger spans residues 59–74 (CEICGNMDTENMCRIC). In terms of domain architecture, Toprim spans 82-177 (SIIAIVETVA…KISRLASGIP (96 aa)).

It belongs to the RecR family.

In terms of biological role, may play a role in DNA repair. It seems to be involved in an RecBC-independent recombinational process of DNA repair. It may act with RecF and RecO. The sequence is that of Recombination protein RecR from Rickettsia africae (strain ESF-5).